We begin with the raw amino-acid sequence, 137 residues long: Large ribosomal subunit protein uL16 (137 aa).

This sequence belongs to the universal ribosomal protein uL16 family. Part of the 50S ribosomal subunit.

Its function is as follows. Binds 23S rRNA and is also seen to make contacts with the A and possibly P site tRNAs. This chain is Large ribosomal subunit protein uL16, found in Ectopseudomonas mendocina (strain ymp) (Pseudomonas mendocina).